The sequence spans 451 residues: Tubulin beta chain (451 aa).

Positions 11, 69, 138, 142, 143, 144, 204, and 226 each coordinate GTP. E69 is a binding site for Mg(2+). A disordered region spans residues Q426–Y451. Over residues T429–Y451 the composition is skewed to acidic residues.

The protein belongs to the tubulin family. As to quaternary structure, dimer of alpha and beta chains. A typical microtubule is a hollow water-filled tube with an outer diameter of 25 nm and an inner diameter of 15 nM. Alpha-beta heterodimers associate head-to-tail to form protofilaments running lengthwise along the microtubule wall with the beta-tubulin subunit facing the microtubule plus end conferring a structural polarity. Microtubules usually have 13 protofilaments but different protofilament numbers can be found in some organisms and specialized cells. Mg(2+) serves as cofactor.

It is found in the cytoplasm. The protein resides in the cytoskeleton. Functionally, tubulin is the major constituent of microtubules, a cylinder consisting of laterally associated linear protofilaments composed of alpha- and beta-tubulin heterodimers. Microtubules grow by the addition of GTP-tubulin dimers to the microtubule end, where a stabilizing cap forms. Below the cap, tubulin dimers are in GDP-bound state, owing to GTPase activity of alpha-tubulin. The chain is Tubulin beta chain from Naegleria pringsheimi (Amoeba).